The chain runs to 100 residues: Apolipoprotein C-II (100 aa).

The signal sequence occupies residues 1-22 (MGTRFLLALFLVLLVLGFEVQG). Residues 66-74 (TVDEKLRDM) are lipid binding. Residues 78–100 (STAAVSTYAGIFTDQLLTLLKGD) are lipoprotein lipase cofactor.

It belongs to the apolipoprotein C2 family. Proapolipoprotein C-II is synthesized as a sialic acid containing glycoprotein which is subsequently desialylated prior to its proteolytic processing. Post-translationally, proapolipoprotein C-II, the major form found in plasma undergoes proteolytic cleavage of its N-terminal hexapeptide to generate apolipoprotein C-II, which occurs as the minor form in plasma.

The protein localises to the secreted. Component of chylomicrons, very low-density lipoproteins (VLDL), low-density lipoproteins (LDL), and high-density lipoproteins (HDL) in plasma. Plays an important role in lipoprotein metabolism as an activator of lipoprotein lipase. Both proapolipoprotein C-II and apolipoprotein C-II can activate lipoprotein lipase. The protein is Apolipoprotein C-II (APOC2) of Otolemur garnettii (Small-eared galago).